The primary structure comprises 506 residues: Apolipoprotein N-acyltransferase (506 aa).

7 helical membrane-spanning segments follow: residues 10 to 30, 33 to 53, 57 to 77, 105 to 125, 139 to 159, 176 to 196, and 205 to 225; these read ANAKVLSRWLLFVGLGIAGWG, LALPPVSGWFLAFVGIVPLWW, VLAPLWAAIAGLCWGWGFYGS, IWLCLSSWGAVLSGSWALLMA, WGVTLWCALEALWSHSPLWWI, LAGPTTITAVVMTVNGLVTLS, and VGLAMTLVAAIALNGVLSVRV. One can recognise a CN hydrolase domain in the interval 238–473; that stretch reads IQGNIPTREK…FVIYAATIFR (236 aa). E279 (proton acceptor) is an active-site residue. K336 is a catalytic residue. Catalysis depends on C385, which acts as the Nucleophile. The chain crosses the membrane as a helical span at residues 483–500; sequence YGDWLLPLLLGMLSLSVL.

Belongs to the CN hydrolase family. Apolipoprotein N-acyltransferase subfamily.

It is found in the cell inner membrane. The enzyme catalyses N-terminal S-1,2-diacyl-sn-glyceryl-L-cysteinyl-[lipoprotein] + a glycerophospholipid = N-acyl-S-1,2-diacyl-sn-glyceryl-L-cysteinyl-[lipoprotein] + a 2-acyl-sn-glycero-3-phospholipid + H(+). Its pathway is protein modification; lipoprotein biosynthesis (N-acyl transfer). Functionally, catalyzes the phospholipid dependent N-acylation of the N-terminal cysteine of apolipoprotein, the last step in lipoprotein maturation. This Thermosynechococcus vestitus (strain NIES-2133 / IAM M-273 / BP-1) protein is Apolipoprotein N-acyltransferase.